A 312-amino-acid chain; its full sequence is Olfactory receptor 6N1 (312 aa).

The Extracellular segment spans residues 1 to 25 (MDTGNWSQVAEFIILGFPHLQGVQI). A glycan (N-linked (GlcNAc...) asparagine) is linked at asparagine 5. The chain crosses the membrane as a helical span at residues 26–46 (YLFLLLLLIYLMTVLGNLLIF). The Cytoplasmic portion of the chain corresponds to 47–54 (LVVCLDSR). Residues 55 to 75 (LHTPMYHFVSILSFSELGYTA) form a helical membrane-spanning segment. Topologically, residues 76–99 (ATIPKMLANLLSEKKTISFSGCLL) are extracellular. The cysteines at positions 97 and 189 are disulfide-linked. A helical transmembrane segment spans residues 100–120 (QIYFFHSLGATECYLLTAMAY). Residues 121–139 (DRYLAICRPLHYPTLMTPT) are Cytoplasmic-facing. The helical transmembrane segment at 140-160 (LCAEIAIGCWLGGLAGPVVEI) threads the bilayer. The Extracellular segment spans residues 161–197 (SLISRLPFCGPNRIQHVFCDFPPVLSLACTDTSINVL). The helical transmembrane segment at 198–217 (VDFVINSCKILATFLLILCS) threads the bilayer. Topologically, residues 218–237 (YVQIICTVLRIPSAAGKRKA) are cytoplasmic. The helical transmembrane segment at 238–258 (ISTCASHFTVVLIFYGSILSM) threads the bilayer. The Extracellular portion of the chain corresponds to 259-271 (YVQLKKSYSLDYD). The helical transmembrane segment at 272–292 (QALAVVYSVLTPFLNPFIYSL) threads the bilayer. Over 293-312 (RNKEIKEAVRRQLKRIGILA) the chain is Cytoplasmic.

It belongs to the G-protein coupled receptor 1 family.

It localises to the cell membrane. Odorant receptor. This is Olfactory receptor 6N1 (OR6N1) from Homo sapiens (Human).